A 636-amino-acid polypeptide reads, in one-letter code: Chaperone protein HtpG (636 aa).

The a; substrate-binding stretch occupies residues 1–342 (MSSETLEFQA…AHDLSLNISR (342 aa)). The b stretch occupies residues 343–558 (ELLQQDRQIQ…AHDVTPTLEK (216 aa)). Residues 559 to 636 (MYRAMGHEVP…ILAERLARTL (78 aa)) form a c region.

This sequence belongs to the heat shock protein 90 family. As to quaternary structure, homodimer.

The protein resides in the cytoplasm. Molecular chaperone. Has ATPase activity. The sequence is that of Chaperone protein HtpG from Salinispora tropica (strain ATCC BAA-916 / DSM 44818 / JCM 13857 / NBRC 105044 / CNB-440).